The following is a 1770-amino-acid chain: Probable outer membrane protein PmpC (1770 aa).

The N-terminal stretch at 1–20 (MKFMSATAVFAAALSSVTEA) is a signal peptide. 5 disordered regions span residues 73 to 109 (LPRK…ELDN), 264 to 311 (EDTL…GKGG), 481 to 505 (PAAP…TNSD), 611 to 818 (ESTP…STTE), and 1271 to 1329 (LRII…TSRT). The span at 85-97 (SPTTEGVSSSSSG) shows a compositional bias: low complexity. Residues 268 to 285 (DSTPETEQTESNGNQDGS) show a composition bias toward polar residues. Composition is skewed to low complexity over residues 294–303 (SESPESTPSP) and 496–505 (QTETSDTNSD). Polar residues-rich tracts occupy residues 631-675 (TEDP…TGNA) and 682-703 (QDST…QSNE). Low complexity-rich tracts occupy residues 719–748 (ESVS…GDQS) and 762–802 (STDS…GDSA). Residues 1303-1319 (NNDASNQGESANGSSSP) are compositionally biased toward polar residues. Residues 1477–1770 (EEVSYNNLWI…MMNCGARMTF (294 aa)) enclose the Autotransporter domain.

This sequence belongs to the PMP outer membrane protein family.

It localises to the secreted. The protein resides in the cell wall. It is found in the cell outer membrane. The chain is Probable outer membrane protein PmpC (pmpC) from Chlamydia trachomatis serovar D (strain ATCC VR-885 / DSM 19411 / UW-3/Cx).